The following is a 359-amino-acid chain: tRNA-specific 2-thiouridylase MnmA (359 aa).

ATP contacts are provided by residues 11–18 (GISGGVDS) and isoleucine 37. The Nucleophile role is filled by cysteine 99. Cysteine 99 and cysteine 195 are disulfide-bonded. Residue glycine 123 participates in ATP binding. Positions 145-147 (KDQ) are interaction with tRNA. Cysteine 195 functions as the Cysteine persulfide intermediate in the catalytic mechanism. An interaction with tRNA region spans residues 304–305 (RY).

It belongs to the MnmA/TRMU family.

It is found in the cytoplasm. The enzyme catalyses S-sulfanyl-L-cysteinyl-[protein] + uridine(34) in tRNA + AH2 + ATP = 2-thiouridine(34) in tRNA + L-cysteinyl-[protein] + A + AMP + diphosphate + H(+). Catalyzes the 2-thiolation of uridine at the wobble position (U34) of tRNA, leading to the formation of s(2)U34. This is tRNA-specific 2-thiouridylase MnmA from Chlorobium phaeobacteroides (strain BS1).